Reading from the N-terminus, the 197-residue chain is dTTP/UTP pyrophosphatase (197 aa).

D70 serves as the catalytic Proton acceptor.

It belongs to the Maf family. YhdE subfamily. Requires a divalent metal cation as cofactor.

It localises to the cytoplasm. It carries out the reaction dTTP + H2O = dTMP + diphosphate + H(+). It catalyses the reaction UTP + H2O = UMP + diphosphate + H(+). In terms of biological role, nucleoside triphosphate pyrophosphatase that hydrolyzes dTTP and UTP. May have a dual role in cell division arrest and in preventing the incorporation of modified nucleotides into cellular nucleic acids. This chain is dTTP/UTP pyrophosphatase (yceF2), found in Shigella sonnei (strain Ss046).